Reading from the N-terminus, the 1013-residue chain is Tolloid-like protein 1 (1013 aa).

The first 30 residues, 1–30 (MGLGTLSPRMLVWLVASGIVFYGELWVCAG), serve as a signal peptide directing secretion. Residues 31 to 147 (LDYDYTFDGN…GQNEKNRVPR (117 aa)) constitute a propeptide that is removed on maturation. In terms of domain architecture, Peptidase M12A spans 148-347 (AATSRTERIW…AQARKLYRCP (200 aa)). Asparagine 169 carries an N-linked (GlcNAc...) asparagine glycan. 4 cysteine pairs are disulfide-bonded: cysteine 190–cysteine 346, cysteine 210–cysteine 232, cysteine 212–cysteine 213, and cysteine 349–cysteine 375. Residue histidine 240 participates in Zn(2+) binding. The active site involves glutamate 241. Residues histidine 244 and histidine 250 each coordinate Zn(2+). 2 consecutive CUB domains span residues 349-461 (CGET…YEAI) and 462-574 (CGGE…FFKE). Residues asparagine 359 and asparagine 390 are each glycosylated (N-linked (GlcNAc...) asparagine). Cystine bridges form between cysteine 402-cysteine 424, cysteine 462-cysteine 488, cysteine 515-cysteine 537, cysteine 578-cysteine 590, cysteine 586-cysteine 599, cysteine 601-cysteine 614, cysteine 618-cysteine 644, cysteine 671-cysteine 693, cysteine 734-cysteine 745, cysteine 741-cysteine 754, cysteine 756-cysteine 769, cysteine 774-cysteine 800, cysteine 827-cysteine 849, cysteine 887-cysteine 917, and cysteine 944-cysteine 966. Residues 574-615 (EEDECAKPDRGGCEQRCLNTLGSYQCACEPGYELGPDRRSCE) form the EGF-like 1; calcium-binding domain. Residues 618–730 (CGGLLTKLNG…KGFKAHFFSD (113 aa)) form the CUB 3 domain. Asparagine 626 is a glycosylation site (N-linked (GlcNAc...) asparagine). Residues 730–770 (DKDECSKDNGGCQHECVNTMGSYMCQCRNGFVLHDNKHDCK) form the EGF-like 2; calcium-binding domain. CUB domains lie at 774–886 (CEQK…HSTE) and 887–1003 (CGGR…YKSI).

Zn(2+) serves as cofactor.

The protein resides in the secreted. Protease which processes procollagen C-propeptides, such as chordin, pro-biglycan and pro-lysyl oxidase. Required for the embryonic development. Predominant protease, which in the development, influences dorsal-ventral patterning and skeletogenesis. This Homo sapiens (Human) protein is Tolloid-like protein 1 (TLL1).